The chain runs to 615 residues: Medium-chain acyl-CoA ligase ACSF2, mitochondrial (615 aa).

The transit peptide at 1-41 (MAVYVGMLRLGRLCAGSSGVLGARAALSRSWQEARLQGVRF) directs the protein to the mitochondrion. Lys-179 carries the N6-acetyllysine modification. At Lys-182 the chain carries N6-acetyllysine; alternate. Lys-182 carries the N6-succinyllysine; alternate modification. Position 263 to 271 (263 to 271 (TSGTTGSPK)) interacts with ATP. N6-acetyllysine is present on residues Lys-340 and Lys-398. Lys-478 carries the post-translational modification N6-succinyllysine. ATP is bound by residues Asp-493 and Arg-508. Lys-510 bears the N6-acetyllysine mark. 2 positions are modified to N6-acetyllysine; alternate: Lys-544 and Lys-570. An N6-succinyllysine; alternate mark is found at Lys-544 and Lys-570. Lys-599 serves as a coordination point for ATP. Residue Lys-599 is modified to N6-succinyllysine.

Belongs to the ATP-dependent AMP-binding enzyme family.

The protein localises to the mitochondrion. The enzyme catalyses a medium-chain fatty acid + ATP + CoA = a medium-chain fatty acyl-CoA + AMP + diphosphate. It carries out the reaction octanoate + ATP + CoA = octanoyl-CoA + AMP + diphosphate. In terms of biological role, acyl-CoA synthases catalyze the initial reaction in fatty acid metabolism, by forming a thioester with CoA. Has some preference toward medium-chain substrates. Plays a role in adipocyte differentiation. This chain is Medium-chain acyl-CoA ligase ACSF2, mitochondrial, found in Homo sapiens (Human).